Reading from the N-terminus, the 87-residue chain is Phosphoribosyl-ATP pyrophosphatase (87 aa).

Belongs to the PRA-PH family.

It localises to the cytoplasm. The enzyme catalyses 1-(5-phospho-beta-D-ribosyl)-ATP + H2O = 1-(5-phospho-beta-D-ribosyl)-5'-AMP + diphosphate + H(+). It participates in amino-acid biosynthesis; L-histidine biosynthesis; L-histidine from 5-phospho-alpha-D-ribose 1-diphosphate: step 2/9. In Nocardioides sp. (strain ATCC BAA-499 / JS614), this protein is Phosphoribosyl-ATP pyrophosphatase.